A 722-amino-acid chain; its full sequence is Dipeptidyl aminopeptidase BII (722 aa).

An N-terminal signal peptide occupies residues 1 to 24 (MRPNLLAAAIAVPLSLLAAQIAQA). 2 disulfides stabilise this stretch: Cys-70/Cys-87 and Cys-166/Cys-174. The active-site Charge relay system is His-86. 215–216 (NW) is a binding site for substrate. Asp-224 acts as the Charge relay system in catalysis. Substrate contacts are provided by residues Asn-330, 655-657 (GNS), and 673-674 (FD). Ser-657 functions as the Charge relay system in the catalytic mechanism.

Belongs to the peptidase S46 family. As to quaternary structure, homodimer.

With respect to regulation, completely inhibited by the serine protease inhibitor diisopropyl fluorophosphate (DFP) and potently inhibited by 0.5 mM ZnCl(2), 10 mM o-phenanthlorine, phenylmethanesulfonyl fluoride (PMSF) and N-tosyl-L-phenyl-alanyl chloromethyl ketone (TPCK), but not by N-tosyl-L-lysyl chloromethyl ketone (TLCK). Activity is not affected significantly by protease inhibitors, such as chymostatin, leupeptin, N-ethylmaleimide (NEM), iodoacetate (IAA), L-trans-epoxysuccinyl-leucylamido(4-guanido)butane (E64) and pepstatin A or by CoCl(2), CaCl(2) and EDTA. In terms of biological role, exopeptidase that catalyzes the removal of dipeptide units (NH2-P2-P1-) from the free amino termini of oligopeptides and small proteins. Peptide digestion is sequential and substrate recognition is non-specific, with the exception that Pro is not suitable as a P1 residue. Removes many residues of bioactive oligopeptides such as angiotensin I and neuromedin N and also cleaves oxidized insulin B chain. Able to hydrolyze an X-Pro bond, an imido bond. No endopeptidase activity. May play a physiological role in feeding. The protein is Dipeptidyl aminopeptidase BII of Pseudoxanthomonas mexicana.